Reading from the N-terminus, the 231-residue chain is 5'-methylthioadenosine/S-adenosylhomocysteine nucleosidase (231 aa).

E12 serves as the catalytic Proton acceptor. Substrate-binding positions include G78, V153, and 174 to 175 (ME). The active-site Proton donor is D198.

This sequence belongs to the PNP/UDP phosphorylase family. MtnN subfamily.

It catalyses the reaction S-adenosyl-L-homocysteine + H2O = S-(5-deoxy-D-ribos-5-yl)-L-homocysteine + adenine. The catalysed reaction is S-methyl-5'-thioadenosine + H2O = 5-(methylsulfanyl)-D-ribose + adenine. The enzyme catalyses 5'-deoxyadenosine + H2O = 5-deoxy-D-ribose + adenine. The protein operates within amino-acid biosynthesis; L-methionine biosynthesis via salvage pathway; S-methyl-5-thio-alpha-D-ribose 1-phosphate from S-methyl-5'-thioadenosine (hydrolase route): step 1/2. Functionally, catalyzes the irreversible cleavage of the glycosidic bond in both 5'-methylthioadenosine (MTA) and S-adenosylhomocysteine (SAH/AdoHcy) to adenine and the corresponding thioribose, 5'-methylthioribose and S-ribosylhomocysteine, respectively. Also cleaves 5'-deoxyadenosine, a toxic by-product of radical S-adenosylmethionine (SAM) enzymes, into 5-deoxyribose and adenine. This Vibrio atlanticus (strain LGP32) (Vibrio splendidus (strain Mel32)) protein is 5'-methylthioadenosine/S-adenosylhomocysteine nucleosidase.